Reading from the N-terminus, the 378-residue chain is MSTPRIVLGVSGGVDSSVAAWKLAQQGEPIAGLFMQNWADDGSGDCRAEDDRRDAVAVCGVLGIPFHFRDFSGEYWNGVFAHFLAEYAAGRTPNPDVLCNREVKFKHFLDAAQALGAERIATGHYAQVAHRGGRWRLLRGADRGKDQSYFLHQLGQAQLAATLFPIGDLEKSTLRRIAQDAGLPTHAKKDSTGICFIGERDFREFLGRYLPARAGEIRDPQGQRIAEHPGVFYFTLGQREGLNIGGVRGRAAAPWYVVGKDVANNVLYVDQDRDSPLLQSRWLQSEQAHWVTGAPPARRFTCTAQTRYRQPDEPCTVDVQDDGSVQVRFERPQRAVTPGQSLVLYDGEECLGGAVIAATDAPLERQLAGSSFSSEVVA.

ATP-binding positions include 9 to 16 (GVSGGVDS) and Met35. Residues 94 to 96 (NPD) are interaction with target base in tRNA. The active-site Nucleophile is the Cys99. Residues Cys99 and Cys195 are joined by a disulfide bond. Gly123 is a binding site for ATP. The interaction with tRNA stretch occupies residues 145-147 (KDQ). Cys195 (cysteine persulfide intermediate) is an active-site residue. Residues 307–308 (RY) form an interaction with tRNA region.

Belongs to the MnmA/TRMU family.

It is found in the cytoplasm. The catalysed reaction is S-sulfanyl-L-cysteinyl-[protein] + uridine(34) in tRNA + AH2 + ATP = 2-thiouridine(34) in tRNA + L-cysteinyl-[protein] + A + AMP + diphosphate + H(+). Its function is as follows. Catalyzes the 2-thiolation of uridine at the wobble position (U34) of tRNA, leading to the formation of s(2)U34. The polypeptide is tRNA-specific 2-thiouridylase MnmA (Xanthomonas euvesicatoria pv. vesicatoria (strain 85-10) (Xanthomonas campestris pv. vesicatoria)).